A 58-amino-acid chain; its full sequence is Small ribosomal subunit protein bS21 (58 aa).

Positions 36 to 58 (EHYEKPSVKRKKKSEAARKRKFK) are disordered. Residues 43–58 (VKRKKKSEAARKRKFK) show a composition bias toward basic residues.

Belongs to the bacterial ribosomal protein bS21 family.

This Clostridium kluyveri (strain NBRC 12016) protein is Small ribosomal subunit protein bS21.